The primary structure comprises 458 residues: Exodeoxyribonuclease 7 large subunit (458 aa).

It belongs to the XseA family. As to quaternary structure, heterooligomer composed of large and small subunits.

Its subcellular location is the cytoplasm. It carries out the reaction Exonucleolytic cleavage in either 5'- to 3'- or 3'- to 5'-direction to yield nucleoside 5'-phosphates.. Bidirectionally degrades single-stranded DNA into large acid-insoluble oligonucleotides, which are then degraded further into small acid-soluble oligonucleotides. In Sodalis glossinidius (strain morsitans), this protein is Exodeoxyribonuclease 7 large subunit.